A 322-amino-acid chain; its full sequence is Putative nickel/cobalt efflux system HI_1248 (322 aa).

The next 6 helical transmembrane spans lie at 7–27 (GLVLLVIALALLVYFSPWFFL), 54–74 (AGTTLIFASFVYGVLHALGPG), 100–120 (LSSLMQGIVAITATTLLVVVL), 137–157 (TALLLLVFLGCYWIWQGLRAY), 228–248 (IFVLFLAYMLDLYSWGILAVL), and 294–314 (LIAGGIMLFFALSLLYGTTIS).

This sequence belongs to the NiCoT transporter (TC 2.A.52) family.

It is found in the cell membrane. Functionally, efflux system for nickel and cobalt. In Haemophilus influenzae (strain ATCC 51907 / DSM 11121 / KW20 / Rd), this protein is Putative nickel/cobalt efflux system HI_1248.